Reading from the N-terminus, the 92-residue chain is Small ribosomal subunit protein uS19 (92 aa).

Belongs to the universal ribosomal protein uS19 family.

Protein S19 forms a complex with S13 that binds strongly to the 16S ribosomal RNA. The protein is Small ribosomal subunit protein uS19 (rpsS) of Synechocystis sp. (strain ATCC 27184 / PCC 6803 / Kazusa).